A 461-amino-acid chain; its full sequence is Photosystem II CP43 reaction center protein (461 aa).

Positions 1-2 (ME) are excised as a propeptide. Threonine 3 carries the N-acetylthreonine modification. At threonine 3 the chain carries Phosphothreonine. 5 helical membrane-spanning segments follow: residues 57 to 81 (LFEV…PHLA), 122 to 143 (LLGP…KDRN), 166 to 188 (KALY…RKIT), 243 to 263 (KPFA…LSYS), and 279 to 300 (WFNN…ASQA). Position 355 (glutamate 355) interacts with [CaMn4O5] cluster. A helical transmembrane segment spans residues 435–459 (RARAAAAGFEKGIDRDFEPVLSMTP).

It belongs to the PsbB/PsbC family. PsbC subfamily. As to quaternary structure, PSII is composed of 1 copy each of membrane proteins PsbA, PsbB, PsbC, PsbD, PsbE, PsbF, PsbH, PsbI, PsbJ, PsbK, PsbL, PsbM, PsbT, PsbX, PsbY, PsbZ, Psb30/Ycf12, at least 3 peripheral proteins of the oxygen-evolving complex and a large number of cofactors. It forms dimeric complexes. It depends on Binds multiple chlorophylls and provides some of the ligands for the Ca-4Mn-5O cluster of the oxygen-evolving complex. It may also provide a ligand for a Cl- that is required for oxygen evolution. PSII binds additional chlorophylls, carotenoids and specific lipids. as a cofactor.

It is found in the plastid. The protein localises to the chloroplast thylakoid membrane. Functionally, one of the components of the core complex of photosystem II (PSII). It binds chlorophyll and helps catalyze the primary light-induced photochemical processes of PSII. PSII is a light-driven water:plastoquinone oxidoreductase, using light energy to abstract electrons from H(2)O, generating O(2) and a proton gradient subsequently used for ATP formation. The chain is Photosystem II CP43 reaction center protein from Gossypium barbadense (Sea Island cotton).